The chain runs to 345 residues: DNA-directed RNA polymerase subunit alpha (345 aa).

The tract at residues 1–233 (MVRNWCSLIR…KQLQVFVGLH (233 aa)) is alpha N-terminal domain (alpha-NTD). The segment at 256–345 (LNDILLRHVE…EEMGEIQEEG (90 aa)) is alpha C-terminal domain (alpha-CTD).

It belongs to the RNA polymerase alpha chain family. In terms of assembly, homodimer. The RNAP catalytic core consists of 2 alpha, 1 beta, 1 beta' and 1 omega subunit. When a sigma factor is associated with the core the holoenzyme is formed, which can initiate transcription.

It carries out the reaction RNA(n) + a ribonucleoside 5'-triphosphate = RNA(n+1) + diphosphate. Its function is as follows. DNA-dependent RNA polymerase catalyzes the transcription of DNA into RNA using the four ribonucleoside triphosphates as substrates. The chain is DNA-directed RNA polymerase subunit alpha from Syntrophus aciditrophicus (strain SB).